A 437-amino-acid polypeptide reads, in one-letter code: Phosphoribosylamine--glycine ligase (437 aa).

The ATP-grasp domain occupies 110–322 (KNLLRSADIP…LVEVMQAVVD (213 aa)). 142–203 (EPTDPVNVVV…EERLTGPEVS (62 aa)) lines the ATP pocket. Positions 292 and 294 each coordinate Mg(2+).

The protein belongs to the GARS family. It depends on Mg(2+) as a cofactor. Requires Mn(2+) as cofactor.

The catalysed reaction is 5-phospho-beta-D-ribosylamine + glycine + ATP = N(1)-(5-phospho-beta-D-ribosyl)glycinamide + ADP + phosphate + H(+). It participates in purine metabolism; IMP biosynthesis via de novo pathway; N(1)-(5-phospho-D-ribosyl)glycinamide from 5-phospho-alpha-D-ribose 1-diphosphate: step 2/2. In Rhodopirellula baltica (strain DSM 10527 / NCIMB 13988 / SH1), this protein is Phosphoribosylamine--glycine ligase.